We begin with the raw amino-acid sequence, 139 residues long: Cellular retinoic acid-binding protein 2 (139 aa).

The short motif at 21 to 31 (KALGVNMMMRK) is the Nuclear localization signal element. A Glycyl lysine isopeptide (Lys-Gly) (interchain with G-Cter in SUMO) cross-link involves residue K103. Residue 134-136 (RVY) coordinates all-trans-retinoate.

This sequence belongs to the calycin superfamily. Fatty-acid binding protein (FABP) family. As to quaternary structure, interacts with importin alpha, RXR and RARA. In terms of processing, sumoylated in response to retinoic acid binding, sumoylation is critical for dissociation from ER and subsequent nuclear translocation.

Its subcellular location is the cytoplasm. The protein localises to the endoplasmic reticulum. It localises to the nucleus. Transports retinoic acid to the nucleus. Regulates the access of retinoic acid to the nuclear retinoic acid receptors. The polypeptide is Cellular retinoic acid-binding protein 2 (Crabp2) (Rattus norvegicus (Rat)).